The sequence spans 109 residues: Small ribosomal subunit protein uS17 (109 aa).

It belongs to the universal ribosomal protein uS17 family. Part of the 30S ribosomal subunit.

In terms of biological role, one of the primary rRNA binding proteins, it binds specifically to the 5'-end of 16S ribosomal RNA. The polypeptide is Small ribosomal subunit protein uS17 (Methanococcus vannielii).